The following is a 316-amino-acid chain: Ornithine carbamoyltransferase (316 aa).

Carbamoyl phosphate contacts are provided by residues 57–60 (STRT), Gln84, Arg108, and 135–138 (HPCQ). Residues Asn166, Asp230, and 234-235 (SM) contribute to the L-ornithine site. Residues 269-270 (CL) and Arg297 each bind carbamoyl phosphate.

It belongs to the aspartate/ornithine carbamoyltransferase superfamily. OTCase family.

The protein resides in the cytoplasm. The enzyme catalyses carbamoyl phosphate + L-ornithine = L-citrulline + phosphate + H(+). Its pathway is amino-acid biosynthesis; L-arginine biosynthesis; L-arginine from L-ornithine and carbamoyl phosphate: step 1/3. Functionally, reversibly catalyzes the transfer of the carbamoyl group from carbamoyl phosphate (CP) to the N(epsilon) atom of ornithine (ORN) to produce L-citrulline. The chain is Ornithine carbamoyltransferase from Bacillus thuringiensis subsp. konkukian (strain 97-27).